Consider the following 25-residue polypeptide: Metallothionein (25 aa).

Residues cysteine 3, cysteine 5, cysteine 11, cysteine 13, cysteine 18, cysteine 20, and cysteine 23 each coordinate Cu(+).

It belongs to the metallothionein superfamily. Type 8 family.

In terms of biological role, the metallothioneins are involved in the cellular sequestration of toxic metal ions. Binds six copper (cuprous) ions. The chain is Metallothionein from Agaricus bisporus (White button mushroom).